We begin with the raw amino-acid sequence, 439 residues long: MNAPHRDETTASHRDDGFFTESLESRDPEIFAASQKELGRQRDEIELIASENIVSAAVMEAQGGVMTNKYAEGYPGRRYYGGCQYVDIAEELAIDRAKQLFGCDFANVQPNSGSQANQGVFTALLQPGDTILGMSLDAGGHLTHGARPNQSGKWFNAVQYGVREGDLEIDYDQIAALAAEHKPKMIIAGGSAIPRIIDFARMREIADTIGAYLLVDMAHFAGMVASGHYPSPFPHAHVATTTTHKTLRGPRGGMIVTNDEAIAKKVNSAIFPGIQGGPLMHVIAGKAVAFGEALRPEFRDYQTQVIANAQALAAQLIKGGLDIVTGGTDTHLMLVDLRAKGVKGNATEKALGRAHITCNKNGIPFDTEKPMVTSGLRLGSPAGTTRGFGEAEFRQIADWIVEVVDGLAANGEDANDAVEAKVRGEVQALCDRFPIYPNL.

The disordered stretch occupies residues 1-20; that stretch reads MNAPHRDETTASHRDDGFFT. (6S)-5,6,7,8-tetrahydrofolate is bound by residues L136 and 140–142; that span reads GHL. K245 is subject to N6-(pyridoxal phosphate)lysine.

Belongs to the SHMT family. In terms of assembly, homodimer. The cofactor is pyridoxal 5'-phosphate.

It localises to the cytoplasm. The catalysed reaction is (6R)-5,10-methylene-5,6,7,8-tetrahydrofolate + glycine + H2O = (6S)-5,6,7,8-tetrahydrofolate + L-serine. The protein operates within one-carbon metabolism; tetrahydrofolate interconversion. It participates in amino-acid biosynthesis; glycine biosynthesis; glycine from L-serine: step 1/1. Catalyzes the reversible interconversion of serine and glycine with tetrahydrofolate (THF) serving as the one-carbon carrier. This reaction serves as the major source of one-carbon groups required for the biosynthesis of purines, thymidylate, methionine, and other important biomolecules. Also exhibits THF-independent aldolase activity toward beta-hydroxyamino acids, producing glycine and aldehydes, via a retro-aldol mechanism. This chain is Serine hydroxymethyltransferase, found in Jannaschia sp. (strain CCS1).